Here is a 125-residue protein sequence, read N- to C-terminus: Hydrogenase maturation factor HypA (125 aa).

H2 contacts Ni(2+). 4 residues coordinate Zn(2+): C73, C76, C96, and C99.

The protein belongs to the HypA/HybF family.

Involved in the maturation of [NiFe] hydrogenases. Required for nickel insertion into the metal center of the hydrogenase. This chain is Hydrogenase maturation factor HypA, found in Methanobrevibacter smithii (strain ATCC 35061 / DSM 861 / OCM 144 / PS).